The sequence spans 314 residues: Dihydroorotate dehydrogenase (fumarate) (314 aa).

Substrate-binding positions include lysine 46, 70–74 (NSMGL), and asparagine 130. 46–47 (KS) contacts FMN. An FMN-binding site is contributed by asparagine 130. Residues serine 132 and cysteine 133 each act as nucleophile in the active site. The FMN site is built by lysine 167 and isoleucine 195. 196 to 197 (NS) is a substrate binding site. FMN is bound by residues glycine 224, 252–253 (GG), and 274–275 (GT).

It belongs to the dihydroorotate dehydrogenase family. Type 1 subfamily. In terms of assembly, homodimer. FMN serves as cofactor.

The protein resides in the cytoplasm. It catalyses the reaction (S)-dihydroorotate + fumarate = orotate + succinate. It functions in the pathway pyrimidine metabolism; UMP biosynthesis via de novo pathway. Functionally, catalyzes the conversion of dihydroorotate to orotate with fumarate as the electron acceptor. This is Dihydroorotate dehydrogenase (fumarate) (URA1) from Saccharomyces bayanus (Yeast).